Here is a 156-residue protein sequence, read N- to C-terminus: 6,7-dimethyl-8-ribityllumazine synthase (156 aa).

5-amino-6-(D-ribitylamino)uracil is bound by residues Phe24, 56–58 (SFE), and 80–82 (AVV). 85-86 (ET) lines the (2S)-2-hydroxy-3-oxobutyl phosphate pocket. His88 (proton donor) is an active-site residue. Phe113 contacts 5-amino-6-(D-ribitylamino)uracil. Position 127 (Arg127) interacts with (2S)-2-hydroxy-3-oxobutyl phosphate.

This sequence belongs to the DMRL synthase family.

It carries out the reaction (2S)-2-hydroxy-3-oxobutyl phosphate + 5-amino-6-(D-ribitylamino)uracil = 6,7-dimethyl-8-(1-D-ribityl)lumazine + phosphate + 2 H2O + H(+). The protein operates within cofactor biosynthesis; riboflavin biosynthesis; riboflavin from 2-hydroxy-3-oxobutyl phosphate and 5-amino-6-(D-ribitylamino)uracil: step 1/2. In terms of biological role, catalyzes the formation of 6,7-dimethyl-8-ribityllumazine by condensation of 5-amino-6-(D-ribitylamino)uracil with 3,4-dihydroxy-2-butanone 4-phosphate. This is the penultimate step in the biosynthesis of riboflavin. This Thermococcus kodakarensis (strain ATCC BAA-918 / JCM 12380 / KOD1) (Pyrococcus kodakaraensis (strain KOD1)) protein is 6,7-dimethyl-8-ribityllumazine synthase.